The following is a 285-amino-acid chain: tRNA uridine(34) hydroxylase (285 aa).

Residues 130-225 (RGDDVVFFDG…YGEAFGDTGL (96 aa)) enclose the Rhodanese domain. Cys185 functions as the Cysteine persulfide intermediate in the catalytic mechanism.

This sequence belongs to the TrhO family.

It catalyses the reaction uridine(34) in tRNA + AH2 + O2 = 5-hydroxyuridine(34) in tRNA + A + H2O. Functionally, catalyzes oxygen-dependent 5-hydroxyuridine (ho5U) modification at position 34 in tRNAs. The sequence is that of tRNA uridine(34) hydroxylase from Rhodococcus opacus (strain B4).